The chain runs to 545 residues: Light-independent protochlorophyllide reductase subunit N (545 aa).

Residues Cys-102, Cys-127, and Cys-187 each contribute to the [4Fe-4S] cluster site.

The protein belongs to the BchN/ChlN family. Protochlorophyllide reductase is composed of three subunits; ChlL, ChlN and ChlB. Forms a heterotetramer of two ChlB and two ChlN subunits. Requires [4Fe-4S] cluster as cofactor.

The protein localises to the plastid. It is found in the chloroplast. The enzyme catalyses chlorophyllide a + oxidized 2[4Fe-4S]-[ferredoxin] + 2 ADP + 2 phosphate = protochlorophyllide a + reduced 2[4Fe-4S]-[ferredoxin] + 2 ATP + 2 H2O. It participates in porphyrin-containing compound metabolism; chlorophyll biosynthesis (light-independent). In terms of biological role, component of the dark-operative protochlorophyllide reductase (DPOR) that uses Mg-ATP and reduced ferredoxin to reduce ring D of protochlorophyllide (Pchlide) to form chlorophyllide a (Chlide). This reaction is light-independent. The NB-protein (ChlN-ChlB) is the catalytic component of the complex. The polypeptide is Light-independent protochlorophyllide reductase subunit N (Chlamydomonas reinhardtii (Chlamydomonas smithii)).